Reading from the N-terminus, the 133-residue chain is Probable non-specific lipid-transfer protein 2 (133 aa).

An N-terminal signal peptide occupies residues 1–31 (MRTVSMAALVVIAAALAWTSSAELASAPAPG). 4 disulfides stabilise this stretch: Cys35–Cys83, Cys45–Cys60, Cys61–Cys106, and Cys81–Cys121.

It belongs to the plant LTP family.

Plant non-specific lipid-transfer proteins transfer phospholipids as well as galactolipids across membranes. May play a role in wax or cutin deposition in the cell walls of expanding epidermal cells and certain secretory tissues. This chain is Probable non-specific lipid-transfer protein 2, found in Parietaria judaica (Pellitory-of-the-wall).